The sequence spans 270 residues: Formamidopyrimidine-DNA glycosylase (270 aa).

Pro-2 serves as the catalytic Schiff-base intermediate with DNA. Catalysis depends on Glu-3, which acts as the Proton donor. Catalysis depends on Lys-57, which acts as the Proton donor; for beta-elimination activity. DNA contacts are provided by His-90, Arg-109, and Lys-150. The FPG-type zinc-finger motif lies at 235–269 (LVYGNKDKPCPRCGTKIKSIIIGQRNSFFCPQCQK). Arg-259 (proton donor; for delta-elimination activity) is an active-site residue.

The protein belongs to the FPG family. In terms of assembly, monomer. Zn(2+) serves as cofactor.

The catalysed reaction is Hydrolysis of DNA containing ring-opened 7-methylguanine residues, releasing 2,6-diamino-4-hydroxy-5-(N-methyl)formamidopyrimidine.. The enzyme catalyses 2'-deoxyribonucleotide-(2'-deoxyribose 5'-phosphate)-2'-deoxyribonucleotide-DNA = a 3'-end 2'-deoxyribonucleotide-(2,3-dehydro-2,3-deoxyribose 5'-phosphate)-DNA + a 5'-end 5'-phospho-2'-deoxyribonucleoside-DNA + H(+). Functionally, involved in base excision repair of DNA damaged by oxidation or by mutagenic agents. Acts as a DNA glycosylase that recognizes and removes damaged bases. Has a preference for oxidized purines, such as 7,8-dihydro-8-oxoguanine (8-oxoG). Has AP (apurinic/apyrimidinic) lyase activity and introduces nicks in the DNA strand. Cleaves the DNA backbone by beta-delta elimination to generate a single-strand break at the site of the removed base with both 3'- and 5'-phosphates. The chain is Formamidopyrimidine-DNA glycosylase from Histophilus somni (strain 129Pt) (Haemophilus somnus).